A 163-amino-acid polypeptide reads, in one-letter code: T-cell surface glycoprotein CD3 zeta chain (163 aa).

Positions 1-21 (MKWKALFTAAILQAQLPITEA) are cleaved as a signal peptide. The Extracellular segment spans residues 22 to 30 (QSFGLLDPK). The helical transmembrane segment at 31-51 (LCYLLDGILFIYGVILTALFL) threads the bilayer. The Cytoplasmic segment spans residues 52–163 (RVKFSRSADA…ALHMQALPPR (112 aa)). Position 58 is a phosphoserine (Ser-58). ITAM domains are found at residues 61–89 (APAY…LDKR), 99–127 (KPRR…EIGM), and 130–158 (ERRR…LHMQ). Tyr-64, Tyr-72, Tyr-83, Tyr-110, Tyr-122, Tyr-141, and Tyr-152 each carry phosphotyrosine. Residues 83–98 (YDVLDKRRGRDPEMGG) show a composition bias toward basic and acidic residues. Residues 83–111 (YDVLDKRRGRDPEMGGKPRRKNPQEGLYN) are disordered.

The protein belongs to the CD3Z/FCER1G family. As to quaternary structure, the TCR-CD3 complex is composed of a CD3D/CD3E and a CD3G/CD3E heterodimers that preferentially associate with TCRalpha and TCRbeta, respectively, to form TCRalpha/CD3E/CD3G and TCRbeta/CD3G/CD3E trimers. In turn, the hexamer interacts with CD3Z homodimer to form the TCR-CD3 complex. Alternatively, TCRalpha and TCRbeta can be replaced by TCRgamma and TCRdelta. Interacts with SLA. Interacts with TRAT1. Interacts with DOCK2. Interacts with SLA2. Interacts with SHB. Interacts with ZAP70. Interacts (tyrosine phosphorylated) with SHC1 (via SH2 domain). Interacts with PTPRC. Interacts with CRK; this interaction regulates CD3Z phosphorylation. Interacts (on T cell side) with CD81, ICAM1 and CD9 at immunological synapses between antigen-presenting cells and T cells. Interacts with CD160. Interacts with LY6E. Interacts with LY6E. The signaling subunit of immunoglobulin gamma (IgG) Fc receptor complex. As a homodimer or a heterodimer with FCER1G, associates with the ligand binding subunit FCGR3A (via transmembrane domain); this interaction is a prerequisite for Fc receptor complex expression on the cell surface. Interacts with CD5. Phosphorylated on Tyr residues after T-cell receptor triggering by LCK in association with CD4/CD8.

It is found in the cell membrane. In terms of biological role, part of the TCR-CD3 complex present on T-lymphocyte cell surface that plays an essential role in adaptive immune response. When antigen presenting cells (APCs) activate T-cell receptor (TCR), TCR-mediated signals are transmitted across the cell membrane by the CD3 chains CD3D, CD3E, CD3G and CD3Z. All CD3 chains contain immunoreceptor tyrosine-based activation motifs (ITAMs) in their cytoplasmic domain. Upon TCR engagement, these motifs become phosphorylated by Src family protein tyrosine kinases LCK and FYN, resulting in the activation of downstream signaling pathways. CD3Z ITAMs phosphorylation creates multiple docking sites for the protein kinase ZAP70 leading to ZAP70 phosphorylation and its conversion into a catalytically active enzyme. Plays an important role in intrathymic T-cell differentiation. Additionally, participates in the activity-dependent synapse formation of retinal ganglion cells (RGCs) in both the retina and dorsal lateral geniculate nucleus (dLGN). The chain is T-cell surface glycoprotein CD3 zeta chain (CD247) from Sus scrofa (Pig).